Here is a 172-residue protein sequence, read N- to C-terminus: uncharacterized protein (172 aa).

2 disordered regions span residues 1-54 and 82-111; these read MPRR…GGSS and ITGG…SVPE. Residues 14–29 are compositionally biased toward low complexity; that stretch reads AAPARSASTAAALPPR. Pro residues predominate over residues 30 to 47; sequence TMAPPPAPSRVQQAPPPT. The span at 89–109 shows a compositional bias: polar residues; it reads SGSNNAPADTSVPQSSYSNSV.

This is an uncharacterized protein from Schizosaccharomyces pombe (strain 972 / ATCC 24843) (Fission yeast).